The chain runs to 389 residues: Chromobox protein homolog 8 (389 aa).

A Chromo domain is found at 11–69 (FAAEALLKRRIRKGRMEYLVKWKGWSQKYSTWEPEENILDARLLAAFEEREREMELYGP). Ser-110 and Ser-130 each carry phosphoserine. The disordered stretch occupies residues 124 to 241 (LRNMGLSPPA…DDTPSGAGKF (118 aa)). Positions 145 to 189 (EAPRDRDRDRDRDRERDRERERERERERERERERERGTSRVDDKP) are enriched in basic and acidic residues. Residues Ser-191, Ser-256, Ser-265, Ser-311, Ser-332, and Ser-352 each carry the phosphoserine modification. The tract at residues 298-327 (GALDPNGTRVRHGSGPPSSGGGLYRDMGAQ) is disordered.

In terms of assembly, component of a PRC1-like complex. Interacts with RING1 RNF2, PCGF1, PCGF2, PCGF3, BMI1, PCGF5 and PCGF6. Interacts with MLLT3 and histone H3. Interacts with PHC2.

The protein resides in the nucleus. Functionally, component of a Polycomb group (PcG) multiprotein PRC1-like complex, a complex class required to maintain the transcriptionally repressive state of many genes, including Hox genes, throughout development. PcG PRC1 complex acts via chromatin remodeling and modification of histones; it mediates monoubiquitination of histone H2A 'Lys-119', rendering chromatin heritably changed in its expressibility. The protein is Chromobox protein homolog 8 (CBX8) of Homo sapiens (Human).